The chain runs to 61 residues: Small ribosomal subunit protein uS14 (61 aa).

Residues Cys24, Cys27, Cys40, and Cys43 each coordinate Zn(2+).

It belongs to the universal ribosomal protein uS14 family. Zinc-binding uS14 subfamily. As to quaternary structure, part of the 30S ribosomal subunit. Contacts proteins S3 and S10. It depends on Zn(2+) as a cofactor.

In terms of biological role, binds 16S rRNA, required for the assembly of 30S particles and may also be responsible for determining the conformation of the 16S rRNA at the A site. In Mycobacterium leprae (strain Br4923), this protein is Small ribosomal subunit protein uS14.